Reading from the N-terminus, the 122-residue chain is Large ribosomal subunit protein bL12 (122 aa).

Belongs to the bacterial ribosomal protein bL12 family. In terms of assembly, homodimer. Part of the ribosomal stalk of the 50S ribosomal subunit. Forms a multimeric L10(L12)X complex, where L10 forms an elongated spine to which 2 to 4 L12 dimers bind in a sequential fashion. Binds GTP-bound translation factors.

Functionally, forms part of the ribosomal stalk which helps the ribosome interact with GTP-bound translation factors. Is thus essential for accurate translation. The sequence is that of Large ribosomal subunit protein bL12 from Streptococcus thermophilus (strain ATCC BAA-491 / LMD-9).